The primary structure comprises 432 residues: Adenylosuccinate synthetase (432 aa).

GTP is bound by residues 12–18 and 40–42; these read GDEGKGK and GHT. Catalysis depends on D13, which acts as the Proton acceptor. Mg(2+) is bound by residues D13 and G40. IMP contacts are provided by residues 13 to 16, 38 to 41, T130, R144, Q225, T240, and R304; these read DEGK and NAGH. Residue H41 is the Proton donor of the active site. 300–306 serves as a coordination point for substrate; it reads ATTGRPR. GTP is bound by residues R306, 332–334, and 414–416; these read KLD and SVG.

This sequence belongs to the adenylosuccinate synthetase family. As to quaternary structure, homodimer. Requires Mg(2+) as cofactor.

The protein localises to the cytoplasm. The catalysed reaction is IMP + L-aspartate + GTP = N(6)-(1,2-dicarboxyethyl)-AMP + GDP + phosphate + 2 H(+). The protein operates within purine metabolism; AMP biosynthesis via de novo pathway; AMP from IMP: step 1/2. Plays an important role in the de novo pathway of purine nucleotide biosynthesis. Catalyzes the first committed step in the biosynthesis of AMP from IMP. The protein is Adenylosuccinate synthetase of Anaeromyxobacter sp. (strain K).